The primary structure comprises 267 residues: Thiamine pyrophosphokinase 1 (267 aa).

The protein belongs to the thiamine pyrophosphokinase family. In terms of tissue distribution, expressed in roots, leaves and flowers.

The protein resides in the cytoplasm. It localises to the cytosol. It carries out the reaction thiamine + ATP = thiamine diphosphate + AMP + H(+). It participates in cofactor biosynthesis; thiamine diphosphate biosynthesis; thiamine diphosphate from thiamine: step 1/1. Its function is as follows. Catalyzes the phosphorylation of thiamine to thiamine pyrophosphate (TPP). TPP is an active cofactor for enzymes involved in glycolysis and energy production. Plant leaves require high levels of TPP for photosynthesis and carbohydrate metabolism. The chain is Thiamine pyrophosphokinase 1 from Arabidopsis thaliana (Mouse-ear cress).